Consider the following 396-residue polypeptide: Probable peptidoglycan glycosyltransferase FtsW (396 aa).

Topologically, residues 1–27 (MPFLDKVKQQYEDWTRITPSNLLYDRA) are cytoplasmic. Residues 28 to 48 (LLLLFFVLLLIGLLAVSSASI) traverse the membrane as a helical segment. At 49–64 (PVGTRLFKDPFYFAKR) the chain is on the periplasmic side. Residues 65-85 (DAIYVFLSCVTCYLCVQVPME) traverse the membrane as a helical segment. Over 86–93 (KWEQWHVR) the chain is Cytoplasmic. A helical membrane pass occupies residues 94–114 (LFAFAIFLLILVLIPGIGLSV). Over 115–122 (NGARRWIP) the chain is Periplasmic. The helical transmembrane segment at 123 to 143 (MVLFNFQPAEFAKLALTCFLA) threads the bilayer. Residues 144 to 157 (SYFTRKYDEVRSRK) lie on the Cytoplasmic side of the membrane. Residues 158–178 (LSAFKPFALMGLMGLFLLSQP) traverse the membrane as a helical segment. At 179-183 (DLGST) the chain is on the periplasmic side. Helical transmembrane passes span 184 to 204 (VVLF…FWQF) and 205 to 225 (VGLM…SAYR). Over 226–285 (LKRFTGFLDPFKDPYGTGFQLSNSLMAFGRGEWVGEGLGNSIQKLEYLPEAHTDFVMAVV) the chain is Periplasmic. Residues 286 to 306 (GEEFGFLGILVIVILLGLLIF) form a helical membrane-spanning segment. The Cytoplasmic segment spans residues 307-323 (RAMKIGRESLLLEQRFK). The helical transmembrane segment at 324-344 (GFFAFGISFWIFFQGFVNLGM) threads the bilayer. At 345-355 (SLGLLPTKGLT) the chain is on the periplasmic side. Residues 356–376 (FPLISYGGSSLIIMSMTIGLL) traverse the membrane as a helical segment. Over 377–396 (LRIDHENRLMRIGQARLRDD) the chain is Cytoplasmic.

Belongs to the SEDS family. FtsW subfamily.

The protein resides in the cell inner membrane. It carries out the reaction [GlcNAc-(1-&gt;4)-Mur2Ac(oyl-L-Ala-gamma-D-Glu-L-Lys-D-Ala-D-Ala)](n)-di-trans,octa-cis-undecaprenyl diphosphate + beta-D-GlcNAc-(1-&gt;4)-Mur2Ac(oyl-L-Ala-gamma-D-Glu-L-Lys-D-Ala-D-Ala)-di-trans,octa-cis-undecaprenyl diphosphate = [GlcNAc-(1-&gt;4)-Mur2Ac(oyl-L-Ala-gamma-D-Glu-L-Lys-D-Ala-D-Ala)](n+1)-di-trans,octa-cis-undecaprenyl diphosphate + di-trans,octa-cis-undecaprenyl diphosphate + H(+). It participates in cell wall biogenesis; peptidoglycan biosynthesis. Peptidoglycan polymerase that is essential for cell division. The chain is Probable peptidoglycan glycosyltransferase FtsW from Pasteurella multocida (strain Pm70).